The sequence spans 146 residues: Small ribosomal subunit protein bS6 (146 aa).

The tract at residues 94–146 (GPITTPSPMMQEGKSRPPHSSDEDSENTAPAKAKTADSPGEDTRTTEESDPKP) is disordered. Composition is skewed to basic and acidic residues over residues 106–115 (GKSRPPHSSD) and 134–146 (EDTR…DPKP).

It belongs to the bacterial ribosomal protein bS6 family.

In terms of biological role, binds together with bS18 to 16S ribosomal RNA. In Nitrosomonas europaea (strain ATCC 19718 / CIP 103999 / KCTC 2705 / NBRC 14298), this protein is Small ribosomal subunit protein bS6.